The following is a 183-amino-acid chain: ATP synthase subunit delta (183 aa).

This sequence belongs to the ATPase delta chain family. As to quaternary structure, F-type ATPases have 2 components, F(1) - the catalytic core - and F(0) - the membrane proton channel. F(1) has five subunits: alpha(3), beta(3), gamma(1), delta(1), epsilon(1). F(0) has three main subunits: a(1), b(2) and c(10-14). The alpha and beta chains form an alternating ring which encloses part of the gamma chain. F(1) is attached to F(0) by a central stalk formed by the gamma and epsilon chains, while a peripheral stalk is formed by the delta and b chains.

It is found in the cell inner membrane. In terms of biological role, f(1)F(0) ATP synthase produces ATP from ADP in the presence of a proton or sodium gradient. F-type ATPases consist of two structural domains, F(1) containing the extramembraneous catalytic core and F(0) containing the membrane proton channel, linked together by a central stalk and a peripheral stalk. During catalysis, ATP synthesis in the catalytic domain of F(1) is coupled via a rotary mechanism of the central stalk subunits to proton translocation. This protein is part of the stalk that links CF(0) to CF(1). It either transmits conformational changes from CF(0) to CF(1) or is implicated in proton conduction. The sequence is that of ATP synthase subunit delta from Rickettsia prowazekii (strain Madrid E).